Reading from the N-terminus, the 601-residue chain is Glutathione-regulated potassium-efflux system protein KefB (601 aa).

The next 13 membrane-spanning stretches (helical) occupy residues 4–24 (ADLL…VPLA), 29–49 (IGAV…GLGF), 55–75 (EILH…GLEL), 87–107 (IFGV…GLLM), 111–131 (FLWQ…TAMA), 152–172 (VLLF…LLAG), 177–197 (HFDW…LIGG), 207–227 (FIAA…LVLS), 230–250 (LFMD…GVLL), 262–282 (AIDP…GMSL), 284–304 (LGVL…LVVI), 324–344 (MQFA…FSTA), and 356–376 (ALLL…MKGI). An RCK N-terminal domain is found at 400-519 (KPQVIVVGFG…AGVTQFSRET (120 aa)).

The protein belongs to the monovalent cation:proton antiporter 2 (CPA2) transporter (TC 2.A.37) family. KefB subfamily. Interacts with the regulatory subunit KefG.

The protein localises to the cell inner membrane. Its function is as follows. Pore-forming subunit of a potassium efflux system that confers protection against electrophiles. Catalyzes K(+)/H(+) antiport. This is Glutathione-regulated potassium-efflux system protein KefB from Salmonella heidelberg (strain SL476).